We begin with the raw amino-acid sequence, 481 residues long: Proline--tRNA ligase (481 aa).

The protein belongs to the class-II aminoacyl-tRNA synthetase family. ProS type 3 subfamily. As to quaternary structure, homodimer.

It is found in the cytoplasm. The enzyme catalyses tRNA(Pro) + L-proline + ATP = L-prolyl-tRNA(Pro) + AMP + diphosphate. In terms of biological role, catalyzes the attachment of proline to tRNA(Pro) in a two-step reaction: proline is first activated by ATP to form Pro-AMP and then transferred to the acceptor end of tRNA(Pro). The chain is Proline--tRNA ligase from Chlorobium chlorochromatii (strain CaD3).